Here is a 459-residue protein sequence, read N- to C-terminus: Elongation factor 1-alpha 2 (459 aa).

The region spanning K5–T242 is the tr-type G domain. The interval G14–S21 is G1. The G2 stretch occupies residues G70–D74. The G3 stretch occupies residues D91–G94. Positions N153–D156 are G4. Residues S194 to F196 are G5. 2 positions are modified to 5-glutamyl glycerylphosphorylethanolamine: E301 and E374.

This sequence belongs to the TRAFAC class translation factor GTPase superfamily. Classic translation factor GTPase family. EF-Tu/EF-1A subfamily.

It is found in the cytoplasm. Functionally, this protein promotes the GTP-dependent binding of aminoacyl-tRNA to the A-site of ribosomes during protein biosynthesis. This is Elongation factor 1-alpha 2 (eft-2) from Oscheius tipulae.